The primary structure comprises 191 residues: Sec-independent protein translocase protein TatB (191 aa).

Residues 1–21 (MFDIGFSELFLILVIGLLVLG) traverse the membrane as a helical segment. A compositionally biased stretch (polar residues) spans 119 to 138 (ESTSQTLTEQLTPSEQVTEA). Disordered stretches follow at residues 119-139 (ESTS…TEAT) and 168-191 (DDDD…DKKA). The segment covering 181-191 (PQTEEIQDKKA) has biased composition (basic and acidic residues).

It belongs to the TatB family. In terms of assembly, the Tat system comprises two distinct complexes: a TatABC complex, containing multiple copies of TatA, TatB and TatC subunits, and a separate TatA complex, containing only TatA subunits. Substrates initially bind to the TatABC complex, which probably triggers association of the separate TatA complex to form the active translocon.

The protein resides in the cell inner membrane. Functionally, part of the twin-arginine translocation (Tat) system that transports large folded proteins containing a characteristic twin-arginine motif in their signal peptide across membranes. Together with TatC, TatB is part of a receptor directly interacting with Tat signal peptides. TatB may form an oligomeric binding site that transiently accommodates folded Tat precursor proteins before their translocation. The polypeptide is Sec-independent protein translocase protein TatB (Pasteurella multocida (strain Pm70)).